The chain runs to 179 residues: Deoxyuridine 5'-triphosphate nucleotidohydrolase, mitochondrial (179 aa).

The N-terminal 41 residues, M1–K41, are a transit peptide targeting the mitochondrion. DUTP is bound by residues R97 to G99, G111 to D114, G122, R165, and F170 to G171.

Belongs to the dUTPase family. In terms of assembly, homotrimer. Mg(2+) serves as cofactor.

Its subcellular location is the mitochondrion. The enzyme catalyses dUTP + H2O = dUMP + diphosphate + H(+). It functions in the pathway pyrimidine metabolism; dUMP biosynthesis; dUMP from dCTP (dUTP route): step 2/2. Functionally, this enzyme is involved in nucleotide metabolism: it produces dUMP, the immediate precursor of thymidine nucleotides and it decreases the intracellular concentration of dUTP so that uracil cannot be incorporated into DNA. This chain is Deoxyuridine 5'-triphosphate nucleotidohydrolase, mitochondrial (dut), found in Dictyostelium discoideum (Social amoeba).